The primary structure comprises 602 residues: Chaperone protein DnaK (602 aa).

Phosphothreonine; by autocatalysis is present on threonine 199.

This sequence belongs to the heat shock protein 70 family.

In terms of biological role, acts as a chaperone. The chain is Chaperone protein DnaK from Carsonella ruddii (strain PV).